A 32-amino-acid chain; its full sequence is Ranatuerin-2La (32 aa).

Cysteines 27 and 32 form a disulfide.

As to expression, expressed by the skin glands.

The protein localises to the secreted. In terms of biological role, antibacterial activity against Gram-positive bacterium S.aureus and Gram-negative bacterium E.coli. Weak activity against C.albicans. The polypeptide is Ranatuerin-2La (Rana luteiventris (Columbia spotted frog)).